The sequence spans 221 residues: Protein-disulfide oxidoreductase DsbI (221 aa).

Residues 27-47 (FLWLLMAVAMGGLIILAHSFF) traverse the membrane as a helical segment. Cysteines 56 and 59 form a disulfide. The next 2 helical transmembrane spans lie at 64–84 (FAMF…KNII) and 85–105 (LKLI…KFSV). A disulfide bridge connects residues cysteine 128 and cysteine 154. A helical membrane pass occupies residues 189 to 209 (LAFYEYGAGVPAGVWAMFCTV).

This sequence belongs to the DsbB family. DsbI subfamily. As to quaternary structure, interacts with DsbL.

The protein localises to the cell inner membrane. Required for disulfide bond formation in some proteins. Part of a redox system composed of DsbI and DsbL that mediates formation of an essential disulfide bond in AssT. The protein is Protein-disulfide oxidoreductase DsbI of Lelliottia amnigena (Enterobacter amnigenus).